A 454-amino-acid chain; its full sequence is Lamina-associated polypeptide 2, isoforms beta/gamma (454 aa).

A nucleoplasmic region spans residues 1-410; that stretch reads MPEFLEDPSV…KSEKTKKGRS (410 aa). An LEM-like domain is found at 5-48; the sequence is LEDPSVLTKDKLKSELVANNVTLPAGEQRKDVYVQLYLQHLTAR. Disordered stretches follow at residues 47-117 and 149-265; these read ARNR…ELTN and LREQ…VETS. A linker region spans residues 49-108; it reads NRPPLPAGTNSKGPPDFSSDEEREPTPVLGSGAAAAGRSRAAVGRKATKKTDKPRQEDKD. The residue at position 57 (T57) is a Phosphothreonine. 3 positions are modified to phosphoserine: S59, S66, and S67. T74 is subject to Phosphothreonine. A compositionally biased stretch (low complexity) spans 78–93; that stretch reads GSGAAAAGRSRAAVGR. S79 carries the post-translational modification Phosphoserine. R86 and R88 each carry omega-N-methylarginine. Over residues 97 to 106 the composition is skewed to basic and acidic residues; the sequence is KKTDKPRQED. Positions 107–117 are enriched in acidic residues; sequence KDDLDVTELTN. In terms of domain architecture, LEM spans 109–153; the sequence is DLDVTELTNEDLLDQLVKYGVNPGPIVGTTRKLYEKKLLKLREQG. Residues 138 to 243 are NAKAP95-binding N; that stretch reads TRKLYEKKLL…TSGSSKGGPL (106 aa). T154 carries the phosphothreonine modification. Polar residues predominate over residues 155-178; the sequence is ESRSSTPLPTISSSAENTRQNGSN. Phosphoserine occurs at positions 156 and 159. Phosphothreonine occurs at positions 160 and 164. S166, S168, S177, S180, S184, and S190 each carry phosphoserine. Residues 179-203 are compositionally biased toward basic and acidic residues; the sequence is DSDRYSDNEEDSKIELKLEKREPLK. K207 is modified (N6-acetyllysine). The residue at position 211 (T211) is a Phosphothreonine. A compositionally biased stretch (polar residues) spans 220 to 237; that stretch reads NQSYSQAGITETEWTSGS. Phosphoserine occurs at positions 222, 224, 250, 254, 265, 292, and 306. Residues 299-371 form a binds lamins B region; it reads TGNFKHASPI…SCRRPIKGAA (73 aa). The interval 300 to 374 is NAKAP95-binding C; it reads GNFKHASPIL…RPIKGAAGRP (75 aa). T312 is modified (phosphothreonine). S315 is subject to Phosphoserine. At R320 the chain carries Citrulline. Residues S362, S378, and S385 each carry the phosphoserine modification. K389 carries the post-translational modification N6-acetyllysine. Residue K401 forms a Glycyl lysine isopeptide (Lys-Gly) (interchain with G-Cter in SUMO2) linkage. S402 is modified (phosphoserine). Residues 411–434 traverse the membrane as a helical; Signal-anchor for type II membrane protein segment; it reads IPVWIKILLFVVVAVFLFLVYQAM. Topologically, residues 435 to 454 are lumenal; the sequence is ETNQVNPFSNFLHVDPRKSN.

This sequence belongs to the LEM family. As to quaternary structure, interacts with LMNB1, LMNB2, BANF1, AKAP8L, GMCL and chromosomes. Isoform Zeta interacts with BANF1/BAF and may sequester it in the cytoplasm. Mitosis-specific phosphorylation specifically abolishes its binding to lamin B and chromosomes. Post-translationally, citrullinated by PADI4. As to expression, expressed in many tissues. Most abundant in adult thymus and fetal liver.

It is found in the nucleus inner membrane. Its subcellular location is the cytoplasm. May help direct the assembly of the nuclear lamina and thereby help maintain the structural organization of the nuclear envelope. Possible receptor for attachment of lamin filaments to the inner nuclear membrane. May be involved in the control of initiation of DNA replication through its interaction with NAKAP95. Its function is as follows. Thymopoietin (TP) and Thymopentin (TP5) may play a role in T-cell development and function. TP5 is an immunomodulating pentapeptide. The chain is Lamina-associated polypeptide 2, isoforms beta/gamma (TMPO) from Homo sapiens (Human).